A 200-amino-acid polypeptide reads, in one-letter code: Potassium-transporting ATPase KdpC subunit (200 aa).

Residues 6 to 26 (PAVVLLILLTLITGIAYPLLT) traverse the membrane as a helical segment.

The protein belongs to the KdpC family. As to quaternary structure, the system is composed of three essential subunits: KdpA, KdpB and KdpC.

The protein localises to the cell inner membrane. Functionally, part of the high-affinity ATP-driven potassium transport (or Kdp) system, which catalyzes the hydrolysis of ATP coupled with the electrogenic transport of potassium into the cytoplasm. This subunit acts as a catalytic chaperone that increases the ATP-binding affinity of the ATP-hydrolyzing subunit KdpB by the formation of a transient KdpB/KdpC/ATP ternary complex. The protein is Potassium-transporting ATPase KdpC subunit of Yersinia enterocolitica serotype O:8 / biotype 1B (strain NCTC 13174 / 8081).